An 845-amino-acid chain; its full sequence is Alanine--tRNA ligase (845 aa).

Residues histidine 552, histidine 556, cysteine 653, and histidine 657 each contribute to the Zn(2+) site.

The protein belongs to the class-II aminoacyl-tRNA synthetase family. Zn(2+) is required as a cofactor.

Its subcellular location is the cytoplasm. It carries out the reaction tRNA(Ala) + L-alanine + ATP = L-alanyl-tRNA(Ala) + AMP + diphosphate. In terms of biological role, catalyzes the attachment of alanine to tRNA(Ala) in a two-step reaction: alanine is first activated by ATP to form Ala-AMP and then transferred to the acceptor end of tRNA(Ala). Also edits incorrectly charged Ser-tRNA(Ala) and Gly-tRNA(Ala) via its editing domain. The protein is Alanine--tRNA ligase of Campylobacter hominis (strain ATCC BAA-381 / DSM 21671 / CCUG 45161 / LMG 19568 / NCTC 13146 / CH001A).